The following is a 322-amino-acid chain: Putative A-type inclusion protein (322 aa).

The tract at residues 284–322 is disordered; sequence LTTEATGSVEVAPPSTDVTEPISDVTPSVDVEPEHPPAF.

The protein belongs to the chordopoxvirinae A26 protein family.

Functionally, encodes a truncated version of poxvirus A26 protein. In Vaccinia virus (strain Copenhagen) (VACV), this protein is Putative A-type inclusion protein.